Consider the following 415-residue polypeptide: Amino acid decarboxylase lolD2 (415 aa).

N6-(pyridoxal phosphate)lysine is present on Lys-62. Pyridoxal 5'-phosphate contacts are provided by residues Ser-194, Gly-231, and 266–269 (EPGT). 315-316 (IV) serves as a coordination point for substrate. Cys-351 acts as the Proton donor; shared with dimeric partner in catalysis. Cys-351 carries the post-translational modification S-nitrosocysteine. Asp-352 is a substrate binding site. A pyridoxal 5'-phosphate-binding site is contributed by Tyr-381.

The protein belongs to the Orn/Lys/Arg decarboxylase class-II family. Homodimer. Requires pyridoxal 5'-phosphate as cofactor.

It participates in alkaloid biosynthesis. Its function is as follows. Amino acid decarboxylase; part of the gene cluster that mediates the biosynthesis of loline alkaloids, potent insecticidal agents composed of a pyrrolizidine ring system and an uncommon ether bridge linking carbons 2 and 7. Lolines are structurally differentiated by the various modifications of the L-amino group and include norloline, loline, N-methylloline, N-acetylloline, N-acetylnorloline, and N-formylloline. The first committed step is the condensation of O-acetyl-L-homoserine (derived from L-aspartic acid) and L-proline, probably catalyzed by the gamma-type pyridoxal 5'-phosphate(PLP)-dependent enzyme lolC, to give the diamino diacid, NACPP. Ensuing cyclization, decarboxylation, and acetylation steps yield 1-exo-acetamidopyrrolizidine (AcAP). LolO is required for installation of the ether bridge upon the pathway intermediate, 1-exo-acetamidopyrrolizidine (AcAP). In sequential 2-oxoglutarate- and O(2)-consuming steps, lolO removes hydrogens from C2 and C7 of AcAP to form both carbon-oxygen bonds in N-acetylnorloline (NANL), the precursor to all other lolines. The enzymes lolD, lolE, lolF and lolT have also been proposed to be involved in the ether-bridge installation. Further processing of the exocyclic moiety of NANL by fungal N-acetamidase (LolN), methyltransferase (LolM), and cytochrome P450 (LolP) enzymes, with occasional involvement of a plant acetyltransferase, generates the other known lolines. LolN transforms NANL to norlonine which is monomethylated and dimethylated to respectively lonine and N-methyllonine (NML) by lolM. LolP catalyzes hydroxylation of the methyl group in N-methylloline (NML) and further oxygenation to N-formylloline (NFL). A plant acetyltransferase is responsible for the acetylation of loline to form N-acetylloline (NAL). LolA might interact with aspartate kinase to prevent feedback inhibition of its activity by these end products and thereby promote production of L-homoserine from L-aspartate. The chain is Amino acid decarboxylase lolD2 from Epichloe uncinata (Endophyte fungus).